The sequence spans 364 residues: Probable 7-methylxanthine methyltransferase 5 (364 aa).

Tyrosine 19 contacts S-adenosyl-L-homocysteine. Residue threonine 26 coordinates theobromine. Residues cysteine 64, glutamine 69, aspartate 101, leucine 102, serine 134, and phenylalanine 135 each contribute to the S-adenosyl-L-homocysteine site. The theobromine site is built by tyrosine 152, histidine 155, and tryptophan 156. 4 residues coordinate Mg(2+): asparagine 172, aspartate 258, phenylalanine 260, and asparagine 261. Phenylalanine 314 contributes to the theobromine binding site.

This sequence belongs to the methyltransferase superfamily. Type-7 methyltransferase family. Mg(2+) serves as cofactor.

It catalyses the reaction 7-methylxanthine + S-adenosyl-L-methionine = theobromine + S-adenosyl-L-homocysteine + H(+). The protein operates within alkaloid biosynthesis. Its function is as follows. Involved in the biosynthesis of theobromine. The chain is Probable 7-methylxanthine methyltransferase 5 from Theobroma cacao (Cacao).